A 264-amino-acid chain; its full sequence is Synaptophysin-like protein 2 (264 aa).

Over 1-33 (MSSTESPSRAADKSPRQQVDRLLEGLRWRRLEE) the chain is Cytoplasmic. An MARVEL domain is found at 30-238 (RLEEPLGFIK…NCWFVFKETP (209 aa)). A helical membrane pass occupies residues 34–54 (PLGFIKVLQWLFAIFAFGSCG). Residues 55–116 (SYSGETGAMV…LMGDFSAPAE (62 aa)) lie on the Vesicular side of the membrane. A helical membrane pass occupies residues 117–137 (FFVTLGIFSFFYTMAALVVYL). At 138–150 (RFHKLYTENKRFP) the chain is on the cytoplasmic side. Residues 151 to 171 (LVDFCVTVSFTFFWLVAAAAW) traverse the membrane as a helical segment. The Vesicular portion of the chain corresponds to 172–213 (GKGLTDVKGATRPSSLTAAMSVCHGEEAVCSAGATPSMGLAN). N-linked (GlcNAc...) asparagine glycosylation is present at Asn-213. A helical transmembrane segment spans residues 214-234 (ISVLFGFINFFLWAGNCWFVF). At 235–264 (KETPWHGQGQDQGQGPSQESAAEQGAVEKQ) the chain is on the cytoplasmic side. The interval 242–264 (QGQDQGQGPSQESAAEQGAVEKQ) is disordered.

Belongs to the synaptophysin/synaptobrevin family. In terms of tissue distribution, skeletal muscle.

The protein resides in the membrane. Functionally, involved in communication between the T-tubular and junctional sarcoplasmic reticulum (SR) membranes. The sequence is that of Synaptophysin-like protein 2 (SYPL2) from Oryctolagus cuniculus (Rabbit).